The chain runs to 262 residues: Type III pantothenate kinase (262 aa).

Residue 12–19 (DIGNTSIA) participates in ATP binding. Residues Tyr94 and 109 to 112 (GSDV) each bind substrate. Asp111 functions as the Proton acceptor in the catalytic mechanism. Position 132 (Asp132) interacts with K(+). Position 135 (Thr135) interacts with ATP. Thr187 lines the substrate pocket.

Belongs to the type III pantothenate kinase family. In terms of assembly, homodimer. NH4(+) is required as a cofactor. It depends on K(+) as a cofactor.

Its subcellular location is the cytoplasm. The enzyme catalyses (R)-pantothenate + ATP = (R)-4'-phosphopantothenate + ADP + H(+). It functions in the pathway cofactor biosynthesis; coenzyme A biosynthesis; CoA from (R)-pantothenate: step 1/5. Catalyzes the phosphorylation of pantothenate (Pan), the first step in CoA biosynthesis. The polypeptide is Type III pantothenate kinase (Borreliella burgdorferi (strain ATCC 35210 / DSM 4680 / CIP 102532 / B31) (Borrelia burgdorferi)).